The primary structure comprises 616 residues: Chaperone protein HscA homolog (616 aa).

The protein belongs to the heat shock protein 70 family.

Its function is as follows. Chaperone involved in the maturation of iron-sulfur cluster-containing proteins. Has a low intrinsic ATPase activity which is markedly stimulated by HscB. The chain is Chaperone protein HscA homolog from Aliivibrio fischeri (strain MJ11) (Vibrio fischeri).